The following is a 201-amino-acid chain: MAKRVTGPEIEKLIQLLAKVPGLGPRSARRAALHLIKKKDQLLGPLSNAMGEAYDKVKICSRCGNVDTVDPCTVCTDTQRDQSVIIVVEDVSDLWALERAGAMNAAYHVLGGTLSPLDGIGPDDLNIRGLIDRVGEGGIRELIIAVNATVEGQTTAHYITDQLQGLDVKITRLAHGVPVGGELDYLDEGTLAAALRARTVI.

A C4-type zinc finger spans residues 60-75; the sequence is CSRCGNVDTVDPCTVC. The Toprim domain occupies 83–178; it reads SVIIVVEDVS…KITRLAHGVP (96 aa).

Belongs to the RecR family.

May play a role in DNA repair. It seems to be involved in an RecBC-independent recombinational process of DNA repair. It may act with RecF and RecO. In Rhizobium etli (strain ATCC 51251 / DSM 11541 / JCM 21823 / NBRC 15573 / CFN 42), this protein is Recombination protein RecR.